A 981-amino-acid polypeptide reads, in one-letter code: Alpha-mannosidase (981 aa).

Zn(2+)-binding residues include H23, D25, and D145. Residue D145 is the Nucleophile of the active site. N312 carries N-linked (GlcNAc...) asparagine glycosylation. H386 contributes to the Zn(2+) binding site. Cystine bridges form between C422/C432, C442/C450, and C800/C807. An N-linked (GlcNAc...) asparagine glycan is attached at N446. Residues 938-957 are disordered; the sequence is KKMKWSVEGDNEQEPQAVRG.

The protein belongs to the glycosyl hydrolase 38 family. In terms of assembly, dimer of dimers of heavy and light subunits. Zn(2+) is required as a cofactor. In terms of processing, produced as a precursor which is then proteolytically cleaved into a 66kD heavy subunit and a 44kD light subunit. Cleavage probably occurs in protein bodies/protein storage vacuoles.

Its subcellular location is the protein storage vacuole. The catalysed reaction is Hydrolysis of terminal, non-reducing alpha-D-mannose residues in alpha-D-mannosides.. With respect to regulation, inhibited by 2,3,4,6-tetra-O-acetyl-5-fluoro-beta-L-gulopyranosyl fluoride which acts as a slow substrate, doubling as a competitive inhibitor as it forms a high steady state concentration of glycosyl-enzyme intermediate that blocks the active site. Inhibited by 2,3,4,6-tetra-O-acetyl-5-fluoro-alpha-D-mannopyranosyl fluoride which also acts as a slow substrate but no intermediates accumulate. Inhibited by EDTA. Inhibited by metal ion Cu(2+). Inhibited by metal ions Fe(2+), Cd(2+) and Co(2+). Inhibited by metal ions Ag(+) and Hg(2+). Competitively inhibited by mannono-1-4-lactone and mannono-1-5-lactone. Inhibited by swainsonine but not by 1-desoxymannojirimycin. Inhibited by pyrrolidine-3,4-diol derivatives. Its function is as follows. Liberates mannose from p-nitrophenyl-alpha-D-mannoside. Liberates mannose from further alpha-D-mannosides including methyl-, benzyl-alpha-D-mannoside, 1-6-linked di-, tri- and tetrasaccharides of alpha-D-mannose and mannosyl-rhamnose. Liberates mannose from various glycoproteins like ovalbumin and ovomucoid. Does not hydrolyze beta-D-mannosides. Has glycosyltransferase activity, forming disaccharides from mannose and lyxose but not from glucose, galactose, ribose, xylose or arabinose. The polypeptide is Alpha-mannosidase (Canavalia ensiformis (Jack bean)).